A 553-amino-acid chain; its full sequence is Phosphomethylpyrimidine synthase (553 aa).

Substrate-binding positions include Asn192, Met221, Tyr250, His286, 306-308 (SRG), 347-350 (DGLR), and Glu386. His390 is a Zn(2+) binding site. Tyr413 serves as a coordination point for substrate. His454 is a Zn(2+) binding site. Residues Cys534, Cys537, and Cys542 each contribute to the [4Fe-4S] cluster site.

The protein belongs to the ThiC family. Homodimer. It depends on [4Fe-4S] cluster as a cofactor.

It carries out the reaction 5-amino-1-(5-phospho-beta-D-ribosyl)imidazole + S-adenosyl-L-methionine = 4-amino-2-methyl-5-(phosphooxymethyl)pyrimidine + CO + 5'-deoxyadenosine + formate + L-methionine + 3 H(+). It participates in cofactor biosynthesis; thiamine diphosphate biosynthesis. Its function is as follows. Catalyzes the synthesis of the hydroxymethylpyrimidine phosphate (HMP-P) moiety of thiamine from aminoimidazole ribotide (AIR) in a radical S-adenosyl-L-methionine (SAM)-dependent reaction. The polypeptide is Phosphomethylpyrimidine synthase (Anaplasma marginale (strain St. Maries)).